Here is a 333-residue protein sequence, read N- to C-terminus: DNA-directed RNA polymerase subunit alpha (333 aa).

The interval 1-233 (MVQEKLRFST…DLFIPFLHAE (233 aa)) is alpha N-terminal domain (alpha-NTD). The tract at residues 266 to 333 (KKEIALKSIF…DILKIQKYFT (68 aa)) is alpha C-terminal domain (alpha-CTD).

It belongs to the RNA polymerase alpha chain family. In terms of assembly, in plastids the minimal PEP RNA polymerase catalytic core is composed of four subunits: alpha, beta, beta', and beta''. When a (nuclear-encoded) sigma factor is associated with the core the holoenzyme is formed, which can initiate transcription.

The protein localises to the plastid. It localises to the chloroplast. It catalyses the reaction RNA(n) + a ribonucleoside 5'-triphosphate = RNA(n+1) + diphosphate. DNA-dependent RNA polymerase catalyzes the transcription of DNA into RNA using the four ribonucleoside triphosphates as substrates. The sequence is that of DNA-directed RNA polymerase subunit alpha from Phaseolus angularis (Azuki bean).